Here is a 379-residue protein sequence, read N- to C-terminus: Cytochrome b (379 aa).

Helical transmembrane passes span 33 to 53, 77 to 98, 113 to 133, and 178 to 198; these read FGSLLGLCLISQILTGLFLAM, WLIRNLHANGASFFFICLYLHI, WNIGVVLFLLVMMTAFVGYVL, and FFAFHFLFPFVVAGATMLHLL. The heme b site is built by His-83 and His-97. His-182 and His-196 together coordinate heme b. Position 201 (His-201) interacts with a ubiquinone. Helical transmembrane passes span 226 to 246, 288 to 308, 320 to 340, and 347 to 367; these read YKDLLGFIIMLTALTMLALFY, LGGVLALLSSILVLMVVPILH, ASQLLFWILVADMLVLTWIGG, and YIIIGQVASVLYFSLFLVLNP.

It belongs to the cytochrome b family. The cytochrome bc1 complex contains 3 respiratory subunits (MT-CYB, CYC1 and UQCRFS1), 2 core proteins (UQCRC1 and UQCRC2) and probably 6 low-molecular weight proteins. Heme b is required as a cofactor.

It localises to the mitochondrion inner membrane. Its function is as follows. Component of the ubiquinol-cytochrome c reductase complex (complex III or cytochrome b-c1 complex) that is part of the mitochondrial respiratory chain. The b-c1 complex mediates electron transfer from ubiquinol to cytochrome c. Contributes to the generation of a proton gradient across the mitochondrial membrane that is then used for ATP synthesis. The polypeptide is Cytochrome b (mt-cyb) (Anguilla rostrata (American eel)).